An 89-amino-acid chain; its full sequence is MSLDTAEKQKLIETHQVHPTDTGSAEVQVAMLSKRISKLSDHLQGNIHDFSSRQGLLKMIGKRKRLLSYIKDKNIQRYQELVKKIGIRG.

This sequence belongs to the universal ribosomal protein uS15 family. As to quaternary structure, part of the 30S ribosomal subunit. Forms a bridge to the 50S subunit in the 70S ribosome, contacting the 23S rRNA.

One of the primary rRNA binding proteins, it binds directly to 16S rRNA where it helps nucleate assembly of the platform of the 30S subunit by binding and bridging several RNA helices of the 16S rRNA. Functionally, forms an intersubunit bridge (bridge B4) with the 23S rRNA of the 50S subunit in the ribosome. The sequence is that of Small ribosomal subunit protein uS15 from Prochlorococcus marinus (strain MIT 9215).